The sequence spans 454 residues: Aquaglyceroporin-9 (454 aa).

Over 1–186 (MEGGLRSPLN…RHTMREPFSE (186 aa)) the chain is Cytoplasmic. The chain crosses the membrane as a helical span at residues 187 to 207 (FFGVFILILFGDGVVAQVVLS). At 208–216 (SGERGSYQS) the chain is on the extracellular side. The chain crosses the membrane as a helical span at residues 217–237 (ISWGWGIGVMLGVYASGVSGA). The Cytoplasmic portion of the chain corresponds to 238 to 257 (HINPAVTFANCIFRKFPWRK). The NPA 1 motif lies at 240–242 (NPA). The helical transmembrane segment at 258 to 278 (FPIYMLAQVLGAMCASGVVYA) threads the bilayer. Residues 279–316 (NYKSAIDMFEGGNNIRTVGLNTSSAGIFCTYPAPFMTK) are Extracellular-facing. N299 carries an N-linked (GlcNAc...) asparagine glycan. The chain crosses the membrane as a helical span at residues 317–337 (TGQFFSEFVASTILMFCIYAL). Residues 338–351 (QDNGNLGSGNLTPL) are Cytoplasmic-facing. A helical membrane pass occupies residues 352-372 (GLFFVIFGIGACFGWETGYAI). The NPA 2 motif lies at 373–375 (NLA). Over 373–403 (NLARDFGPRLMSYFLGYGHEVWSAGNYYFWV) the chain is Extracellular. A helical transmembrane segment spans residues 404 to 424 (PMVAPFIGCLFGGWLYDVFIF). Over 425–454 (TGESPINTPWMGLKRLMPGGLGSKKVDSKV) the chain is Cytoplasmic.

The protein belongs to the MIP/aquaporin (TC 1.A.8) family.

It localises to the membrane. The enzyme catalyses H2O(in) = H2O(out). The catalysed reaction is glycerol(in) = glycerol(out). Water channel required to facilitate the transport of water across membranes. May play a role in the vegetative growth and pathogenicity. The polypeptide is Aquaglyceroporin-9 (Botryotinia fuckeliana (strain B05.10) (Noble rot fungus)).